Consider the following 254-residue polypeptide: Receptor expression-enhancing protein 2 (254 aa).

The next 2 helical transmembrane spans lie at 1 to 21 and 35 to 55; these read MVSW…YPAY and YVKW…ETLT. Phosphoserine is present on serine 152. The disordered stretch occupies residues 194–254; sequence LSLRSSTSQP…KKSSGGGDSA (61 aa). Residues 205-219 show a composition bias toward basic and acidic residues; sequence PRTETSEDDLGDKAP.

The protein belongs to the DP1 family. Interacts with odorant receptor proteins.

The protein resides in the membrane. Its function is as follows. Required for endoplasmic reticulum (ER) network formation, shaping and remodeling. May enhance the cell surface expression of odorant receptors. The chain is Receptor expression-enhancing protein 2 (Reep2) from Mus musculus (Mouse).